The primary structure comprises 549 residues: MFLRFIEEVIKALGEYGDKKFLRESEHADLASTIAFKLAKERKKSPKEIADEIVENLEVESEYIGSVESVNGYINFFASYEFLEDTVNVILDEDENYGHLNLKGEILIEHTSANPDGPLHIGHIRNSIIGDTIARIFAKAGFDVKTHYYVNDMGRQTAITVLGIEKFGLKDKKPDHAVAEAYIEANKLLESNPELEEQVEKLMLAYEEGDEKTVEKFRRAVETALEGIKQTLKTINVEHDEFVWESEFVRNGYVGKVLGILEERGLVKKNGAWTIELEGFDKEVVLRRENGTTLYITRDLAYHMWKNENYERFINVLGADHKLYGAQLSKILELLGLKPPEIIFFEFVSLPEGSMSTRRGKFISADELISKVRDEAWKILSERDMEEDEKRKIADAVAVGAIRFDFIKIAPEKHMTFDWSKALDFERQTASYIQYSHARACSILRKAVEDGMPELEFKGELCTAGERKLVMLLSKMPYVVKRIVSELRPNVFAEYLLSVAGTFNDFYRDHPVLKAESEVRMHRLAIVDATRVVLRNGLELLGIEPLERM.

A 'HIGH' region motif is present at residues 113–123 (ANPDGPLHIGH).

This sequence belongs to the class-I aminoacyl-tRNA synthetase family.

It is found in the cytoplasm. It carries out the reaction tRNA(Arg) + L-arginine + ATP = L-arginyl-tRNA(Arg) + AMP + diphosphate. This chain is Arginine--tRNA ligase (argS), found in Archaeoglobus fulgidus (strain ATCC 49558 / DSM 4304 / JCM 9628 / NBRC 100126 / VC-16).